The chain runs to 237 residues: Ribonuclease PH (237 aa).

Residues Arg-86 and 124–126 (GTR) each bind phosphate.

Belongs to the RNase PH family. Homohexameric ring arranged as a trimer of dimers.

The enzyme catalyses tRNA(n+1) + phosphate = tRNA(n) + a ribonucleoside 5'-diphosphate. Its function is as follows. Phosphorolytic 3'-5' exoribonuclease that plays an important role in tRNA 3'-end maturation. Removes nucleotide residues following the 3'-CCA terminus of tRNAs; can also add nucleotides to the ends of RNA molecules by using nucleoside diphosphates as substrates, but this may not be physiologically important. Probably plays a role in initiation of 16S rRNA degradation (leading to ribosome degradation) during starvation. The polypeptide is Ribonuclease PH (Methylobacterium radiotolerans (strain ATCC 27329 / DSM 1819 / JCM 2831 / NBRC 15690 / NCIMB 10815 / 0-1)).